The chain runs to 198 residues: Zinc finger protein 41 homolog (198 aa).

Positions 1-12 (MEKPAGRKKKTP) are enriched in basic residues. The tract at residues 1 to 55 (MEKPAGRKKKTPTPREEADVQKSALREEKVSGDRKPPERPTVPRKPRTEPCLSPE) is disordered. Over residues 13-38 (TPREEADVQKSALREEKVSGDRKPPE) the composition is skewed to basic and acidic residues. 4 consecutive C2H2-type zinc fingers follow at residues 87-109 (YECS…QRVH), 115-137 (FKCA…QRTH), 143-165 (FKCG…QKTH), and 171-193 (YECT…QKRH).

Belongs to the krueppel C2H2-type zinc-finger protein family.

Its subcellular location is the nucleus. Its function is as follows. A putative DNA-binding regulatory protein associated with meiosis in spermatogenesis. This Homo sapiens (Human) protein is Zinc finger protein 41 homolog (ZFP41).